The sequence spans 424 residues: Phosphomethylpyrimidine synthase (424 aa).

Substrate contacts are provided by residues Asn66, Met95, Tyr124, His163, 185-187 (SRG), 226-229 (DGMR), and Glu265. His269 is a Zn(2+) binding site. Phe292 is a binding site for substrate. His333 is a binding site for Zn(2+). 3 residues coordinate [4Fe-4S] cluster: Cys408, Cys411, and Cys415.

This sequence belongs to the ThiC family. [4Fe-4S] cluster serves as cofactor.

It carries out the reaction 5-amino-1-(5-phospho-beta-D-ribosyl)imidazole + S-adenosyl-L-methionine = 4-amino-2-methyl-5-(phosphooxymethyl)pyrimidine + CO + 5'-deoxyadenosine + formate + L-methionine + 3 H(+). It participates in cofactor biosynthesis; thiamine diphosphate biosynthesis. Its function is as follows. Catalyzes the synthesis of the hydroxymethylpyrimidine phosphate (HMP-P) moiety of thiamine from aminoimidazole ribotide (AIR) in a radical S-adenosyl-L-methionine (SAM)-dependent reaction. The chain is Phosphomethylpyrimidine synthase from Thermotoga sp. (strain RQ2).